Here is a 240-residue protein sequence, read N- to C-terminus: Pyridoxine 5'-phosphate synthase (240 aa).

Asn6 is a 3-amino-2-oxopropyl phosphate binding site. Position 8–9 (8–9 (DH)) interacts with 1-deoxy-D-xylulose 5-phosphate. Arg17 lines the 3-amino-2-oxopropyl phosphate pocket. Residue His42 is the Proton acceptor of the active site. 2 residues coordinate 1-deoxy-D-xylulose 5-phosphate: Arg44 and His49. Catalysis depends on Glu69, which acts as the Proton acceptor. Thr99 lines the 1-deoxy-D-xylulose 5-phosphate pocket. His190 functions as the Proton donor in the catalytic mechanism. Residues Gly191 and 212–213 (GH) contribute to the 3-amino-2-oxopropyl phosphate site.

It belongs to the PNP synthase family. Homooctamer; tetramer of dimers.

It localises to the cytoplasm. It carries out the reaction 3-amino-2-oxopropyl phosphate + 1-deoxy-D-xylulose 5-phosphate = pyridoxine 5'-phosphate + phosphate + 2 H2O + H(+). Its pathway is cofactor biosynthesis; pyridoxine 5'-phosphate biosynthesis; pyridoxine 5'-phosphate from D-erythrose 4-phosphate: step 5/5. Its function is as follows. Catalyzes the complicated ring closure reaction between the two acyclic compounds 1-deoxy-D-xylulose-5-phosphate (DXP) and 3-amino-2-oxopropyl phosphate (1-amino-acetone-3-phosphate or AAP) to form pyridoxine 5'-phosphate (PNP) and inorganic phosphate. In Pseudomonas entomophila (strain L48), this protein is Pyridoxine 5'-phosphate synthase.